A 395-amino-acid chain; its full sequence is S-adenosylmethionine synthase (395 aa).

ATP is bound at residue His15. Asp17 contributes to the Mg(2+) binding site. Glu43 contributes to the K(+) binding site. L-methionine is bound at residue Gln99. The tract at residues 99–109 (QSPDIAMGVNE) is flexible loop. ATP is bound by residues 174 to 176 (DGK), 240 to 241 (RF), Asp249, 255 to 256 (RK), Ala272, and Lys276. Asp249 is an L-methionine binding site. L-methionine is bound at residue Lys280.

The protein belongs to the AdoMet synthase family. Homotetramer; dimer of dimers. Mg(2+) is required as a cofactor. It depends on K(+) as a cofactor.

It is found in the cytoplasm. It catalyses the reaction L-methionine + ATP + H2O = S-adenosyl-L-methionine + phosphate + diphosphate. The protein operates within amino-acid biosynthesis; S-adenosyl-L-methionine biosynthesis; S-adenosyl-L-methionine from L-methionine: step 1/1. Functionally, catalyzes the formation of S-adenosylmethionine (AdoMet) from methionine and ATP. The overall synthetic reaction is composed of two sequential steps, AdoMet formation and the subsequent tripolyphosphate hydrolysis which occurs prior to release of AdoMet from the enzyme. The polypeptide is S-adenosylmethionine synthase (Moorella thermoacetica (strain ATCC 39073 / JCM 9320)).